Reading from the N-terminus, the 314-residue chain is GATA zinc finger domain-containing protein 19 (314 aa).

This Dictyostelium discoideum (Social amoeba) protein is GATA zinc finger domain-containing protein 19 (gtaS).